Consider the following 262-residue polypeptide: 3-methyl-2-oxobutanoate hydroxymethyltransferase (262 aa).

2 residues coordinate Mg(2+): aspartate 44 and aspartate 83. 3-methyl-2-oxobutanoate-binding positions include aspartate 44 to serine 45, aspartate 83, and lysine 112. Residue glutamate 114 participates in Mg(2+) binding. Glutamate 180 acts as the Proton acceptor in catalysis.

The protein belongs to the PanB family. In terms of assembly, homodecamer; pentamer of dimers. Requires Mg(2+) as cofactor.

The protein resides in the cytoplasm. The catalysed reaction is 3-methyl-2-oxobutanoate + (6R)-5,10-methylene-5,6,7,8-tetrahydrofolate + H2O = 2-dehydropantoate + (6S)-5,6,7,8-tetrahydrofolate. It functions in the pathway cofactor biosynthesis; (R)-pantothenate biosynthesis; (R)-pantoate from 3-methyl-2-oxobutanoate: step 1/2. In terms of biological role, catalyzes the reversible reaction in which hydroxymethyl group from 5,10-methylenetetrahydrofolate is transferred onto alpha-ketoisovalerate to form ketopantoate. In Chromobacterium violaceum (strain ATCC 12472 / DSM 30191 / JCM 1249 / CCUG 213 / NBRC 12614 / NCIMB 9131 / NCTC 9757 / MK), this protein is 3-methyl-2-oxobutanoate hydroxymethyltransferase.